Here is a 507-residue protein sequence, read N- to C-terminus: Histidine--tRNA ligase (507 aa).

It belongs to the class-II aminoacyl-tRNA synthetase family. Homodimer.

It is found in the cytoplasm. The enzyme catalyses tRNA(His) + L-histidine + ATP = L-histidyl-tRNA(His) + AMP + diphosphate + H(+). This is Histidine--tRNA ligase from Rhizobium leguminosarum bv. trifolii (strain WSM2304).